We begin with the raw amino-acid sequence, 744 residues long: C-type polyheme cytochrome OmcB (744 aa).

The first 23 residues, M1 to G23, serve as a signal peptide directing secretion. A lipid anchor (N-palmitoyl cysteine) is attached at C24. A lipid anchor (S-diacylglycerol cysteine) is attached at C24. The heme c site is built by C48, C51, H52, C81, C84, H85, C107, C110, H111, C141, C144, H145, C185, C188, H189, C225, C228, H229, C303, C306, H307, C382, C385, H386, C430, C433, H434, C480, C483, H484, C555, C558, H559, C587, C590, and H591.

Binds 12 heme c groups per subunit.

Its subcellular location is the cell outer membrane. Functionally, involved in anaerobic respiration with Fe(3+) as terminal electron acceptor. Acts as an electron-transport mediator in the dissimilatory reduction of Fe(3+). In Geobacter sulfurreducens (strain DL-1 / KN400), this protein is C-type polyheme cytochrome OmcB (omcB).